A 271-amino-acid chain; its full sequence is 1,4-dihydroxy-2-naphthoyl-CoA synthase (271 aa).

Residues 71 to 75 (SGGDQ), tyrosine 83, 115 to 119 (YAIGG), threonine 141, serine 147, tyrosine 244, and lysine 259 contribute to the substrate site. 140–142 (QTG) contributes to the hydrogencarbonate binding site. A compositionally biased stretch (basic and acidic residues) spans 250–263 (KEGRDSFKEKRKPD). The tract at residues 250–271 (KEGRDSFKEKRKPDFGQFPRFP) is disordered.

This sequence belongs to the enoyl-CoA hydratase/isomerase family. MenB subfamily. It depends on hydrogencarbonate as a cofactor.

It carries out the reaction 2-succinylbenzoyl-CoA + H(+) = 1,4-dihydroxy-2-naphthoyl-CoA + H2O. It participates in quinol/quinone metabolism; 1,4-dihydroxy-2-naphthoate biosynthesis; 1,4-dihydroxy-2-naphthoate from chorismate: step 6/7. Its pathway is quinol/quinone metabolism; menaquinone biosynthesis. Functionally, converts o-succinylbenzoyl-CoA (OSB-CoA) to 1,4-dihydroxy-2-naphthoyl-CoA (DHNA-CoA). This Bacillus subtilis (strain 168) protein is 1,4-dihydroxy-2-naphthoyl-CoA synthase.